The chain runs to 84 residues: Exodeoxyribonuclease 7 small subunit (84 aa).

The tract at residues 65 to 84 (QEGDWTTSPFEPASGEPPGG) is disordered.

Belongs to the XseB family. Heterooligomer composed of large and small subunits.

Its subcellular location is the cytoplasm. The enzyme catalyses Exonucleolytic cleavage in either 5'- to 3'- or 3'- to 5'-direction to yield nucleoside 5'-phosphates.. Bidirectionally degrades single-stranded DNA into large acid-insoluble oligonucleotides, which are then degraded further into small acid-soluble oligonucleotides. This Syntrophobacter fumaroxidans (strain DSM 10017 / MPOB) protein is Exodeoxyribonuclease 7 small subunit.